The primary structure comprises 219 residues: Small ribosomal subunit protein uS19 (219 aa).

Residues 1-128 form a unknown region; sequence MGFKGAWNKR…YEEIYAQYKQ (128 aa). The small ribosomal subunit protein uS19 stretch occupies residues 129 to 219; that stretch reads MTEKKAYVDP…DKTAKVVKKK (91 aa).

The protein belongs to the universal ribosomal protein uS19 family.

In terms of biological role, protein S19 forms a complex with S13 that binds strongly to the 16S ribosomal RNA. The chain is Small ribosomal subunit protein uS19 from Aquifex pyrophilus.